Reading from the N-terminus, the 261-residue chain is Protein FAM216A (261 aa).

The segment at 1–52 is disordered; sequence MPSRCPGVAGPPALARTEGSEGSAGQSYHQNSKGTGEQHKAERIKEGHRMSS. Residues 23-35 are compositionally biased toward polar residues; that stretch reads SAGQSYHQNSKGT. A compositionally biased stretch (basic and acidic residues) spans 36–49; the sequence is GEQHKAERIKEGHR.

The protein belongs to the FAM216 family.

This Rattus norvegicus (Rat) protein is Protein FAM216A (Fam216a).